The primary structure comprises 165 residues: Phosphopantetheine adenylyltransferase (165 aa).

Position 9 (S9) interacts with substrate. ATP contacts are provided by residues 9-10 and H17; that span reads SF. Residues K41, I75, and R89 each coordinate substrate. Residues 90–92, E100, and 125–131 contribute to the ATP site; these read GVR and YLFVRSD.

The protein belongs to the bacterial CoaD family. Homohexamer. Mg(2+) serves as cofactor.

The protein localises to the cytoplasm. It carries out the reaction (R)-4'-phosphopantetheine + ATP + H(+) = 3'-dephospho-CoA + diphosphate. Its pathway is cofactor biosynthesis; coenzyme A biosynthesis; CoA from (R)-pantothenate: step 4/5. Its function is as follows. Reversibly transfers an adenylyl group from ATP to 4'-phosphopantetheine, yielding dephospho-CoA (dPCoA) and pyrophosphate. The polypeptide is Phosphopantetheine adenylyltransferase (Borrelia duttonii (strain Ly)).